The primary structure comprises 301 residues: MSNPELSSEKKASLVETLKNKLQALAEQHVDVLESLAPVVRKRVDVLIEIQSQHDELEAKFLEEKSALEAKYHKLYGPLYSKRSEIVSGVLEVEGETEEREEKGVPDFWLKAMKNNEILAEEIHESDEEALKYLKDIKWCRIDDLKGFKFEFFFDTNPFFKNQVLTKTYHMIDEDDEPILEKAIGTEIEWHPGNCLTQEVLTKESLESTKPITKTEEYESFFNFFSPPQVPEDDAKIDENTVEELQNQMERDYDIASTLRDKIIPHAVSWFTGEAVQDEDYGASWVDDEEDDDDEYSDEEA.

The stretch at 15 to 69 (VETLKNKLQALAEQHVDVLESLAPVVRKRVDVLIEIQSQHDELEAKFLEEKSALE) forms a coiled coil. Residues 36–51 (LAPVVRKRVDVLIEIQ) carry the Nuclear export signal motif. Positions 279–301 (EDYGASWVDDEEDDDDEYSDEEA) are disordered. Ser297 carries the phosphoserine; by CK2 modification.

The protein belongs to the nucleosome assembly protein (NAP) family.

The protein localises to the nucleus. It localises to the cytoplasm. Functionally, may modulate chromatin structure by regulation of nucleosome assembly/disassembly. In Oryza sativa subsp. indica (Rice), this protein is Nucleosome assembly protein 1;3 (NAP1;3).